The primary structure comprises 388 residues: Nocturnin (388 aa).

Position 152 (Glu-152) interacts with Mg(2+). Substrate-binding positions include Glu-152, 176 to 178 (KPW), Asn-220, 243 to 246 (HLKA), 281 to 283 (DFN), and His-371.

It belongs to the CCR4/nocturin family. It depends on Mg(2+) as a cofactor. In terms of tissue distribution, expressed only in the photoreceptors of the retina. Expression is controlled by the retinal circadian clock.

It localises to the cytoplasm. The protein localises to the nucleus. It is found in the perinuclear region. The protein resides in the mitochondrion. The enzyme catalyses NADP(+) + H2O = phosphate + NAD(+). It carries out the reaction NADPH + H2O = phosphate + NADH. Functionally, phosphatase which catalyzes the conversion of NADP(+) to NAD(+) and of NADPH to NADH. Shows a small preference for NADPH over NADP(+). Component of the circadian clock or downstream effector of clock function. Exhibits a high amplitude circadian rhythm with maximal levels in early evening. In constant darkness or constant light, the amplitude of the rhythm decreases. The chain is Nocturnin from Xenopus laevis (African clawed frog).